The primary structure comprises 141 residues: Pyrophosphate-energized proton pump (141 aa).

The next 3 helical transmembrane spans lie at 11-31 (GLIA…TLTV), 46-66 (GTNL…IVVI), and 121-141 (LAGL…AGMI).

The protein belongs to the H(+)-translocating pyrophosphatase (TC 3.A.10) family. As to quaternary structure, homodimer. Requires Mg(2+) as cofactor.

It localises to the cell inner membrane. It catalyses the reaction diphosphate + H2O + H(+)(in) = 2 phosphate + 2 H(+)(out). Functionally, proton pump that utilizes the energy of pyrophosphate hydrolysis as the driving force for proton movement across the membrane. Generates a proton motive force. The polypeptide is Pyrophosphate-energized proton pump (hppA) (Anaplasma marginale).